The following is a 150-amino-acid chain: Viral late gene transcription factor 2 (150 aa).

The protein belongs to the orthopoxvirus VLTF-2/OPG126 family. In terms of assembly, interacts with itself. Interacts with the late transcription factors VLTF-1/OPG093.

Its function is as follows. Acts with RNA polymerase to initiate transcription from late gene promoters. This is Viral late gene transcription factor 2 (OPG126) from Vaccinia virus (strain Copenhagen) (VACV).